The sequence spans 37 residues: Protein YhiY (37 aa).

The sequence is that of Protein YhiY from Escherichia coli (strain K12).